A 114-amino-acid polypeptide reads, in one-letter code: Putative pterin-4-alpha-carbinolamine dehydratase (114 aa).

Belongs to the pterin-4-alpha-carbinolamine dehydratase family.

It catalyses the reaction (4aS,6R)-4a-hydroxy-L-erythro-5,6,7,8-tetrahydrobiopterin = (6R)-L-erythro-6,7-dihydrobiopterin + H2O. In Chlorobium luteolum (strain DSM 273 / BCRC 81028 / 2530) (Pelodictyon luteolum), this protein is Putative pterin-4-alpha-carbinolamine dehydratase.